Consider the following 98-residue polypeptide: Large ribosomal subunit protein eL21 (98 aa).

Positions 1–24 (MVKKAHSFRRKTRGKLSKHPRRRG) are enriched in basic residues. The tract at residues 1 to 27 (MVKKAHSFRRKTRGKLSKHPRRRGLPP) is disordered.

The protein belongs to the eukaryotic ribosomal protein eL21 family. As to quaternary structure, part of the 50S ribosomal subunit.

The chain is Large ribosomal subunit protein eL21 from Thermococcus kodakarensis (strain ATCC BAA-918 / JCM 12380 / KOD1) (Pyrococcus kodakaraensis (strain KOD1)).